The primary structure comprises 230 residues: Thymidylate kinase (230 aa).

Residue 20–27 (GGEGSGKS) coordinates ATP.

It belongs to the thymidylate kinase family.

The catalysed reaction is dTMP + ATP = dTDP + ADP. In terms of biological role, phosphorylation of dTMP to form dTDP in both de novo and salvage pathways of dTTP synthesis. The chain is Thymidylate kinase from Nitrobacter winogradskyi (strain ATCC 25391 / DSM 10237 / CIP 104748 / NCIMB 11846 / Nb-255).